A 363-amino-acid chain; its full sequence is Uroporphyrinogen decarboxylase (363 aa).

Substrate-binding positions include 27 to 31, Asp-77, Tyr-157, Thr-212, and His-333; that span reads RQAGR.

The protein belongs to the uroporphyrinogen decarboxylase family. In terms of assembly, homodimer.

The protein resides in the cytoplasm. The catalysed reaction is uroporphyrinogen III + 4 H(+) = coproporphyrinogen III + 4 CO2. Its pathway is porphyrin-containing compound metabolism; protoporphyrin-IX biosynthesis; coproporphyrinogen-III from 5-aminolevulinate: step 4/4. Functionally, catalyzes the decarboxylation of four acetate groups of uroporphyrinogen-III to yield coproporphyrinogen-III. The sequence is that of Uroporphyrinogen decarboxylase from Cupriavidus pinatubonensis (strain JMP 134 / LMG 1197) (Cupriavidus necator (strain JMP 134)).